A 1357-amino-acid polypeptide reads, in one-letter code: DNA-directed RNA polymerase subunit beta (1357 aa).

This sequence belongs to the RNA polymerase beta chain family. In terms of assembly, the RNAP catalytic core consists of 2 alpha, 1 beta, 1 beta' and 1 omega subunit. When a sigma factor is associated with the core the holoenzyme is formed, which can initiate transcription.

The enzyme catalyses RNA(n) + a ribonucleoside 5'-triphosphate = RNA(n+1) + diphosphate. Functionally, DNA-dependent RNA polymerase catalyzes the transcription of DNA into RNA using the four ribonucleoside triphosphates as substrates. This chain is DNA-directed RNA polymerase subunit beta, found in Pseudomonas putida (strain GB-1).